A 271-amino-acid polypeptide reads, in one-letter code: MVLIKEFRVVLPCSVQEYQVGQLYSVAEASKNETGGGEGIEVLKNEPYENDGEKGQYTHKIYHLKSKVPAFVRMIAPEGSLVFHEKAWNAYPYCRTIVTNEYMKDDFFIKIETWHKPDLGTLENVHGLDPNTWKTVEIVHIDIADRSQVEPADYKADEDPALFQSVKTKRGPLGPNWKKELANTPDCPKMCAYKLVTIKFKWWGLQSKVENFIQKQEKRIFTNLHRQLFCWIDKWIDLTMEDIRRMEDETQKELETMRKKGSVRGTSAADA.

K215 bears the N6-acetyllysine mark. The residue at position 262 (S262) is a Phosphoserine.

Belongs to the PtdIns transfer protein family. PI transfer class I subfamily. Constitutive phosphorylation of Ser-262 has no effect on phospholipid transfer activity but is required for Golgi targeting. In terms of tissue distribution, expressed abundantly in brain, kidney, liver, and lung, but in a lesser amount in testis.

It localises to the golgi apparatus. The protein resides in the golgi apparatus membrane. The protein localises to the endoplasmic reticulum membrane. The enzyme catalyses a 1,2-diacyl-sn-glycero-3-phosphocholine(in) = a 1,2-diacyl-sn-glycero-3-phosphocholine(out). The catalysed reaction is a 1,2-diacyl-sn-glycero-3-phospho-(1D-myo-inositol)(in) = a 1,2-diacyl-sn-glycero-3-phospho-(1D-myo-inositol)(out). It carries out the reaction an N-(acyl)-sphingosylphosphocholine(in) = an N-(acyl)-sphingosylphosphocholine(out). Phosphatidylinositol transfer activity is inhibited by N-ethylmaleimide. Its function is as follows. Catalyzes the transfer of phosphatidylinositol between membranes. Also catalyzes the transfer of phosphatidylcholine and sphingomyelin between membranes. Required for COPI-mediated retrograde transport from the Golgi to the endoplasmic reticulum; phosphatidylinositol and phosphatidylcholine transfer activity is essential for this function. This is Phosphatidylinositol transfer protein beta isoform (Pitpnb) from Rattus norvegicus (Rat).